A 130-amino-acid polypeptide reads, in one-letter code: Granulin (130 aa).

Positions 1–26 (MNYSKIFIFGIISLILMALFSSTVES) are cleaved as a signal peptide. Disulfide bonds link cysteine 67–cysteine 79 and cysteine 73–cysteine 89.

This sequence belongs to the granulin family. Granulins are disulfide bridged.

It is found in the secreted. The polypeptide is Granulin (grn) (Dictyostelium discoideum (Social amoeba)).